A 76-amino-acid chain; its full sequence is UPF0291 protein Aflv_1503 (76 aa).

The interval 56 to 76 (DPNGNDVTPQKLKDSKKKRLH) is disordered.

It belongs to the UPF0291 family.

The protein resides in the cytoplasm. This Anoxybacillus flavithermus (strain DSM 21510 / WK1) protein is UPF0291 protein Aflv_1503.